Reading from the N-terminus, the 318-residue chain is Acetyl-coenzyme A carboxylase carboxyl transferase subunit alpha (318 aa).

Residues 38–292 (ALDRKAEEML…GEAIAAMLGE (255 aa)) enclose the CoA carboxyltransferase C-terminal domain.

This sequence belongs to the AccA family. Acetyl-CoA carboxylase is a heterohexamer composed of biotin carboxyl carrier protein (AccB), biotin carboxylase (AccC) and two subunits each of ACCase subunit alpha (AccA) and ACCase subunit beta (AccD).

The protein resides in the cytoplasm. The catalysed reaction is N(6)-carboxybiotinyl-L-lysyl-[protein] + acetyl-CoA = N(6)-biotinyl-L-lysyl-[protein] + malonyl-CoA. The protein operates within lipid metabolism; malonyl-CoA biosynthesis; malonyl-CoA from acetyl-CoA: step 1/1. Component of the acetyl coenzyme A carboxylase (ACC) complex. First, biotin carboxylase catalyzes the carboxylation of biotin on its carrier protein (BCCP) and then the CO(2) group is transferred by the carboxyltransferase to acetyl-CoA to form malonyl-CoA. This is Acetyl-coenzyme A carboxylase carboxyl transferase subunit alpha from Paracoccus denitrificans (strain Pd 1222).